The chain runs to 156 residues: Nascent polypeptide-associated complex subunit beta (156 aa).

Disordered stretches follow at residues 1–42 (MPID…KDDT) and 129–156 (QANE…AEVE). The 66-residue stretch at 38-103 (NKDDTKLHNQ…AQEKNLQELF (66 aa)) folds into the NAC-A/B domain.

Belongs to the NAC-beta family. In terms of assembly, part of the nascent polypeptide-associated complex (NAC), consisting of EGD2 and EGD1. NAC associates with ribosomes via EGD1.

The protein localises to the cytoplasm. The protein resides in the nucleus. In terms of biological role, component of the nascent polypeptide-associated complex (NAC), a dynamic component of the ribosomal exit tunnel, protecting the emerging polypeptides from interaction with other cytoplasmic proteins to ensure appropriate nascent protein targeting. The NAC complex also promotes mitochondrial protein import by enhancing productive ribosome interactions with the outer mitochondrial membrane and blocks the inappropriate interaction of ribosomes translating non-secretory nascent polypeptides with translocation sites in the membrane of the endoplasmic reticulum. EGD1 may act as a transcription factor that exert a negative effect on the expression of several genes that are transcribed by RNA polymerase II. The polypeptide is Nascent polypeptide-associated complex subunit beta (EGD1) (Candida glabrata (strain ATCC 2001 / BCRC 20586 / JCM 3761 / NBRC 0622 / NRRL Y-65 / CBS 138) (Yeast)).